The following is a 138-amino-acid chain: ATP synthase epsilon chain, chloroplastic (138 aa).

This sequence belongs to the ATPase epsilon chain family. In terms of assembly, F-type ATPases have 2 components, CF(1) - the catalytic core - and CF(0) - the membrane proton channel. CF(1) has five subunits: alpha(3), beta(3), gamma(1), delta(1), epsilon(1). CF(0) has three main subunits: a, b and c.

Its subcellular location is the plastid. It is found in the chloroplast thylakoid membrane. Its function is as follows. Produces ATP from ADP in the presence of a proton gradient across the membrane. The chain is ATP synthase epsilon chain, chloroplastic from Huperzia lucidula (Shining clubmoss).